The chain runs to 84 residues: MKRIISKKSNRIFKPKPCFFHVEKIKYIDYKDVELVSKYINNHGKILSSKITGNCAKHQRLISNVIKRARIMALIPFISERIRK.

The protein belongs to the bacterial ribosomal protein bS18 family. In terms of assembly, part of the 30S ribosomal subunit. Forms a tight heterodimer with protein bS6.

Binds as a heterodimer with protein bS6 to the central domain of the 16S rRNA, where it helps stabilize the platform of the 30S subunit. The sequence is that of Small ribosomal subunit protein bS18 from Mycoplasma mobile (strain ATCC 43663 / 163K / NCTC 11711) (Mesomycoplasma mobile).